The following is a 261-amino-acid chain: Ribosomal RNA small subunit methyltransferase J (261 aa).

Residues 129-130 (ER) and D182 each bind S-adenosyl-L-methionine.

This sequence belongs to the methyltransferase superfamily. RsmJ family.

The protein localises to the cytoplasm. The catalysed reaction is guanosine(1516) in 16S rRNA + S-adenosyl-L-methionine = N(2)-methylguanosine(1516) in 16S rRNA + S-adenosyl-L-homocysteine + H(+). Specifically methylates the guanosine in position 1516 of 16S rRNA. The polypeptide is Ribosomal RNA small subunit methyltransferase J (Desulfotalea psychrophila (strain LSv54 / DSM 12343)).